The sequence spans 223 residues: Large ribosomal subunit protein uL3 (223 aa).

Residues 137-157 (GRASHGNSRSHNVPGSIGMAQ) are disordered. At glutamine 157 the chain carries N5-methylglutamine.

It belongs to the universal ribosomal protein uL3 family. In terms of assembly, part of the 50S ribosomal subunit. Forms a cluster with proteins L14 and L19. Methylated by PrmB.

One of the primary rRNA binding proteins, it binds directly near the 3'-end of the 23S rRNA, where it nucleates assembly of the 50S subunit. The polypeptide is Large ribosomal subunit protein uL3 (Burkholderia pseudomallei (strain 1106a)).